Consider the following 65-residue polypeptide: 7 kDa A-type inclusion protein (65 aa).

Polar residues predominate over residues 1 to 20; the sequence is MSNQNIPQLSEYQTSVSQVA. The tract at residues 1-31 is disordered; it reads MSNQNIPQLSEYQTSVSQVAVTPPPKPETPQ.

The sequence is that of 7 kDa A-type inclusion protein from Vaccinia virus (strain Copenhagen) (VACV).